Consider the following 246-residue polypeptide: 4-hydroxy-tetrahydrodipicolinate reductase (246 aa).

Residues 8-13, 75-77, and 99-102 contribute to the NAD(+) site; these read GISGRM, GTT, and ASNY. Histidine 132 functions as the Proton donor/acceptor in the catalytic mechanism. Histidine 133 contacts (S)-2,3,4,5-tetrahydrodipicolinate. The Proton donor role is filled by lysine 136. 142–143 is a (S)-2,3,4,5-tetrahydrodipicolinate binding site; sequence GT.

Belongs to the DapB family.

It is found in the cytoplasm. The catalysed reaction is (S)-2,3,4,5-tetrahydrodipicolinate + NAD(+) + H2O = (2S,4S)-4-hydroxy-2,3,4,5-tetrahydrodipicolinate + NADH + H(+). It catalyses the reaction (S)-2,3,4,5-tetrahydrodipicolinate + NADP(+) + H2O = (2S,4S)-4-hydroxy-2,3,4,5-tetrahydrodipicolinate + NADPH + H(+). The protein operates within amino-acid biosynthesis; L-lysine biosynthesis via DAP pathway; (S)-tetrahydrodipicolinate from L-aspartate: step 4/4. Functionally, catalyzes the conversion of 4-hydroxy-tetrahydrodipicolinate (HTPA) to tetrahydrodipicolinate. The protein is 4-hydroxy-tetrahydrodipicolinate reductase of Akkermansia muciniphila (strain ATCC BAA-835 / DSM 22959 / JCM 33894 / BCRC 81048 / CCUG 64013 / CIP 107961 / Muc).